The chain runs to 90 residues: Chaplin-G (90 aa).

The N-terminal stretch at Met1–Ala27 is a signal peptide. One can recognise a Chaplin domain in the interval Ser38 to Asn78. A disulfide bond links Cys58 and Cys76.

The protein belongs to the chaplin family. Short chaplin subfamily.

It localises to the cell surface. The protein localises to the secreted. Its subcellular location is the cell wall. Its function is as follows. One of 8 partially redundant surface-active proteins required for efficient formation of aerial mycelium; the short chaplins assemble into a hydrophobic, amyloidal fibrillar surface layer that envelopes and protects aerial hyphae and spores, presumably anchored to the long chaplins. Chaplins have an overlapping function with the surface-active SapB peptide; chaplins are essential on minimal medium while on rich medium both chaplins and SapB are required for efficient aerial hyphae formation. Chaplins are also involved in cell attachment to a hydrophobic surface. Forms amyloid fibrils in vitro probably composed of stacked beta-sheets, at low extracellular concentrations individually restores the ability to form aerial hyphae to a chaplin-deficient strain. A small chaplin extract (ChpD, ChpE, ChpF, ChpG and ChpH) self-assembles into 2 different amyloids; small fibrils at the air-water interface form an amphipathic membrane that resembles spore-surface structures involved in aerial hyphae formation, and hydrophilic fibrils in solution that resemble the fibers that attach cells to a hydrophobic surface. At the air-water interface the hydrophilic surface is in contact with water (probably equivalent to the peptidoglycan layer), while the hydrophobic face is exposed to the air, making the surface of the aerial hyphae hydrophobic. A small chaplin extract applied to a chaplin-deficient strain restores aerial hyphae formation. The small chaplin extract forms an amyloid-like structure similar to that seen on the surface of cells without rodlets (rdlA-rdlB deletions), and is highly surface active, reducing surface tension from 72 to 26 mJ/m(2), which probably allows escape of hyphae from an aqueous environment into air. ChpF and ChpG are sufficient to restore the rodlet layer and hydrophobicity to a strain deleted for the other 6 chaplin genes. In Streptomyces coelicolor (strain ATCC BAA-471 / A3(2) / M145), this protein is Chaplin-G.